Here is a 359-residue protein sequence, read N- to C-terminus: 3-dehydroquinate synthase (359 aa).

Residues 71–76 (DGEAYK), 105–109 (GVIGD), 129–130 (TT), Lys-142, and Lys-151 each bind NAD(+). Residues Glu-184, His-247, and His-264 each contribute to the Zn(2+) site.

It belongs to the sugar phosphate cyclases superfamily. Dehydroquinate synthase family. It depends on Co(2+) as a cofactor. Requires Zn(2+) as cofactor. The cofactor is NAD(+).

It localises to the cytoplasm. The enzyme catalyses 7-phospho-2-dehydro-3-deoxy-D-arabino-heptonate = 3-dehydroquinate + phosphate. The protein operates within metabolic intermediate biosynthesis; chorismate biosynthesis; chorismate from D-erythrose 4-phosphate and phosphoenolpyruvate: step 2/7. In terms of biological role, catalyzes the conversion of 3-deoxy-D-arabino-heptulosonate 7-phosphate (DAHP) to dehydroquinate (DHQ). The protein is 3-dehydroquinate synthase of Burkholderia mallei (strain NCTC 10247).